The sequence spans 609 residues: MEWDSGSDLSADDASSLADDEEGGLFPGGGPIPYPVGNLLHTAPCGFVVTDAVEPDQPIIYVNTVFEMVTGYRAEEVLGGNCRFLQCRGPFAKRRHPLVDSMVVSEIRKCIDEGIEFQGELLNFRKDGSPLMNRLRLTPIYGDDDTITHIIGIQFFIETDIDLGPVLGSSTKEKSIDGIYSALAAGERNVSRGMCGLFQLSDEVVSMKILSRLTPRDVASVSSVCRRLYVLTKNEDLWRRVCQNAWGSETTRVLETVPGAKRLGWGRLARELTTLEAAAWRKLSVGGSVEPSRCNFSACAVGNRVVLFGGEGVNMQPMNDTFVLDLNSDYPEWQHVKVSSPPPGRWGHTLTCVNGSNLVVFGGCGQQGLLNDVFVLNLDAKPPTWREISGLAPPLPRSWHSSCTLDGTKLIVSGGCADSGVLLSDTFLLDLSIEKPVWREIPAAWTPPSRLGHTLSVYGGRKILMFGGLAKSGPLKFRSSDVFTMDLSEEEPCWRCVTGSGMPGAGNPGGVAPPPRLDHVAVNLPGGRILIFGGSVAGLHSASQLYLLDPTEDKPTWRILNIPGRPPRFAWGHGTCVVGGTRAIVLGGQTGEEWMLSELHELSLASYLT.

Residues 1 to 17 (MEWDSGSDLSADDASSL) show a composition bias toward low complexity. The tract at residues 1–24 (MEWDSGSDLSADDASSLADDEEGG) is disordered. One can recognise a PAS domain in the interval 32–114 (IPYPVGNLLH…SEIRKCIDEG (83 aa)). S-4a-FMN cysteine is present on Cys82. In terms of domain architecture, PAC spans 118 to 161 (QGELLNFRKDGSPLMNRLRLTPIYGDDDTITHIIGIQFFIETDI). The region spanning 195–241 (CGLFQLSDEVVSMKILSRLTPRDVASVSSVCRRLYVLTKNEDLWRRV) is the F-box domain. 5 Kelch repeats span residues 292 to 342 (SRCN…SSPP), 345 to 392 (RWGH…SGLA), 397 to 445 (RSWH…PAAW), 450 to 501 (RLGH…TGSG), and 516 to 564 (RLDH…NIPG).

The protein belongs to the ADAGIO family. As to quaternary structure, interacts with NFXL2. Interacts (via N-terminus) with GI and (via Kelch repeats) with ADO3. Component of an E3 ubiquitin ligase SCF(ADO1) complex composed of SKP1A/ASK1 (or SKP1B/ASK2), CUL1, RBX1 and ADO1. Also interacts with SKP1D/ASK4, SKP1K/ASK11, CRY1, PHYB, APRR1 and APRR5, and probably with SKP1N/ASK14 and SKP1S/ASK19. In terms of processing, may be ubiquitinated. Degraded in a proteasome-dependent manner. FMN binds covalently to cysteine after exposure to blue light and is reversed in the dark. Ubiquitously expressed with higher levels in cotyledons and leaves.

The protein localises to the nucleus. It is found in the cytoplasm. It participates in protein modification; protein ubiquitination. Functionally, component of an E3 ubiquitin ligase complex that plays a central role in blue light-dependent circadian cycles. Acts as a blue light photoreceptor, due to the presence of FMN, that mediates light-regulated protein degradation of critical clock components by targeting them to the proteasome complex. The SCF(ADO1) E3 ubiquitin ligase complex is involved in the regulation of circadian clock-dependent processes including the transition to flowering time, hypocotyl elongation, cotyledons and leaf movement rhythms. APRR1/TOC1 and APRR5, but not 'GIGANTEA', are proteolytic substrates of this ubiquitin ligase complex. Blue light enhances cooperative stabilization of 'GIGANTEA' and ADO1/ZTL, leading to amplification and sharpening of the expression profile of APRR1/TOC1. ADO1/ZTL interacts with ADO3, preventing the interaction of ADO3 with CDF1. This chain is Adagio protein 1 (ADO1), found in Arabidopsis thaliana (Mouse-ear cress).